Here is a 170-residue protein sequence, read N- to C-terminus: Small ribosomal subunit protein bS16 (170 aa).

The interval 114-170 is disordered; that stretch reads EGGPTTEAAKPKKKAATSGAKKAAKAAEPEAAAPEAAEPEAAAPAEGGEQAESSTES. Residues 142-170 show a composition bias toward low complexity; the sequence is PEAAAPEAAEPEAAAPAEGGEQAESSTES.

This sequence belongs to the bacterial ribosomal protein bS16 family.

This chain is Small ribosomal subunit protein bS16, found in Mycobacterium avium (strain 104).